The chain runs to 180 residues: MEQKAVILDEQAIRRALTRIAHEMIERNKGMKDVILAGIKTRGIHLAKRLAERIEQIEGNPVIVGELDITLYRDDLTKKTDNQDPLVKGADIPADINDKTLIVVDDVLFTGRTVRAAMDALVDVGRPSSIQLAVLVDRGHRELPIRADYIGKNIPTSKAETVMVQLNEVDQNDLVAIYEK.

A PRPP-binding motif is present at residues 101-113; sequence LIVVDDVLFTGRT.

This sequence belongs to the purine/pyrimidine phosphoribosyltransferase family. PyrR subfamily. Homodimer and homohexamer; in equilibrium.

The enzyme catalyses UMP + diphosphate = 5-phospho-alpha-D-ribose 1-diphosphate + uracil. Its function is as follows. Regulates transcriptional attenuation of the pyrimidine nucleotide (pyr) operon by binding in a uridine-dependent manner to specific sites on pyr mRNA. This disrupts an antiterminator hairpin in the RNA and favors formation of a downstream transcription terminator, leading to a reduced expression of downstream genes. Functionally, also displays a weak uracil phosphoribosyltransferase activity which is not physiologically significant. The chain is Bifunctional protein PyrR from Bacillus pumilus (strain SAFR-032).